A 109-amino-acid polypeptide reads, in one-letter code: MSVKIRLSRGGAKKRPFYSIVVANSRAPRDGDFIEKVGTYNPMVPHDHPERVVLQEDRIKEWLAKGAQPTDRVARFLGKANLIPMPALRETPKKSAPKAKAQERAKAAG.

Positions alanine 87 to glycine 109 are disordered. Residues lysine 100–glycine 109 are compositionally biased toward basic and acidic residues.

This sequence belongs to the bacterial ribosomal protein bS16 family.

The polypeptide is Small ribosomal subunit protein bS16 (Rhodospirillum centenum (strain ATCC 51521 / SW)).